Consider the following 1216-residue polypeptide: Sodium/potassium/calcium exchanger 1 (1216 aa).

At 1 to 446 the chain is on the extracellular side; that stretch reads MGKLIRMGAQ…DLFSVEERRQ (446 aa). A disordered region spans residues 94-196; the sequence is EATAGRDGTP…KYSPSPLGRM (103 aa). Polar residues-rich tracts occupy residues 110–135 and 144–166; these read NTPS…TPTG and SATP…SYTR. 2 N-linked (GlcNAc...) asparagine glycosylation sites follow: asparagine 290 and asparagine 303. A helical membrane pass occupies residues 447 to 467; that stretch reads GWVVLHIFGMMYVFVALAIVC. Topologically, residues 468-491 are cytoplasmic; that stretch reads DEYFVPALGVITDKLQISEDVAGA. The Alpha-1 repeat unit spans residues 488–528; that stretch reads VAGATFMAAGGSAPELFTSLIGVFISHSNVGIGTIVGSAVF. The chain crosses the membrane as a helical span at residues 492–512; sequence TFMAAGGSAPELFTSLIGVFI. Over 513-518 the chain is Extracellular; it reads SHSNVG. A helical membrane pass occupies residues 519-539; that stretch reads IGTIVGSAVFNILFVIGTCAL. The Cytoplasmic portion of the chain corresponds to 540–557; that stretch reads FSREILNLTWWPLFRDIT. A helical membrane pass occupies residues 558-578; it reads FYIFDLMMLILFFLDSLIAWW. Glutamate 579 is a topological domain (extracellular). Residues 580–600 form a helical membrane-spanning segment; the sequence is SVLLLLAYAFYVFTMKWNQQL. Topologically, residues 601–1024 are cytoplasmic; it reads ELWVKEQLNK…SLEWPETRRK (424 aa). The residue at position 652 (serine 652) is a Phosphoserine. The segment at 677-1018 is disordered; sequence GEARPSKDKE…ENEQPLSLEW (342 aa). Residues 702–712 show a composition bias toward basic and acidic residues; it reads AESKPEEEPAK. Threonine 717 bears the Phosphothreonine mark. The stretch at 796-811 is one 1; approximate repeat; it reads DEDEGEIQAEGGEVKG. The interval 796-928 is 8 X 17 AA tandem repeats of D-E-D-E-G-E-I-Q-A-G-E-[GA]-G-E-V-[EK]-G; sequence DEDEGEIQAE…QAGEAGEVEG (133 aa). 6 tandem repeats follow at residues 812–828, 829–845, 846–862, 863–879, 880–896, and 897–913. Acidic residues-rich tracts occupy residues 824–834, 841–851, 858–868, 875–885, 892–902, 924–941, and 981–1011; these read GEVEGDEDEGE, GEVE…DEGE, and GDSE…EENE. The stretch at 914 to 928 is one 8; approximate repeat; sequence DEGEIQAGEAGEVEG. The chain crosses the membrane as a helical span at residues 1025–1045; that stretch reads QAIYLFLLPIVFPLWLTVPDV. Residues 1046–1052 are Extracellular-facing; the sequence is RRLEAKK. The helical transmembrane segment at 1053-1073 threads the bilayer; that stretch reads FFVITFLGSILWIAMFSYLMV. The Cytoplasmic segment spans residues 1074 to 1088; it reads WWAHQVGETIGISEE. A helical transmembrane segment spans residues 1089–1109; sequence IMGLTILAAGTSIPDLITSVI. The stretch at 1096–1127 is one Alpha-2 repeat; the sequence is AAGTSIPDLITSVIVARKGLGDMAVSSSVGSN. Topologically, residues 1110–1127 are extracellular; it reads VARKGLGDMAVSSSVGSN. A helical transmembrane segment spans residues 1128–1148; sequence IFDITVGLPLPWMLFSLINGL. Residues 1149-1157 are Cytoplasmic-facing; that stretch reads QPVAVSSNG. The helical transmembrane segment at 1158 to 1178 threads the bilayer; that stretch reads LFCAIVLLFLMLLFVISSIAL. The Extracellular portion of the chain corresponds to 1179 to 1185; it reads CKWRMNK. Residues 1186-1206 traverse the membrane as a helical segment; that stretch reads ILGFTMFLLYFVFLIISVMLE. Residues 1207–1216 lie on the Cytoplasmic side of the membrane; that stretch reads DRIISCPVSV.

Belongs to the Ca(2+):cation antiporter (CaCA) (TC 2.A.19) family. SLC24A subfamily. In terms of processing, the uncleaved signal sequence is required for efficient membrane targeting and proper membrane integration and topology. Post-translationally, glycosylated. In terms of tissue distribution, retina.

It is found in the cell membrane. The enzyme catalyses Ca(2+)(out) + K(+)(out) + 4 Na(+)(in) = Ca(2+)(in) + K(+)(in) + 4 Na(+)(out). Functionally, calcium, potassium:sodium antiporter that transports 1 Ca(2+) and 1 K(+) in exchange for 4 Na(+). Critical component of the visual transduction cascade, controlling the calcium concentration of outer segments during light and darkness. Light causes a rapid lowering of cytosolic free calcium in the outer segment of both retinal rod and cone photoreceptors and the light-induced lowering of calcium is caused by extrusion via this protein which plays a key role in the process of light adaptation. This Bos taurus (Bovine) protein is Sodium/potassium/calcium exchanger 1 (SLC24A1).